Consider the following 337-residue polypeptide: ATP-dependent 6-phosphofructokinase (337 aa).

G11 provides a ligand contact to ATP. 21–25 (RAVVR) serves as a coordination point for ADP. ATP-binding positions include 72–73 (RY) and 102–105 (GDGS). Residue D103 participates in Mg(2+) binding. A substrate-binding site is contributed by 125-127 (TID). D127 functions as the Proton acceptor in the catalytic mechanism. ADP is bound at residue R154. Substrate contacts are provided by residues R162 and 169-171 (MGR). Residues 185 to 187 (GAD) and 214 to 216 (KNH) each bind ADP. Substrate contacts are provided by residues E223, R245, and 251–254 (HILR).

The protein belongs to the phosphofructokinase type A (PFKA) family. ATP-dependent PFK group I subfamily. Prokaryotic clade 'B1' sub-subfamily. As to quaternary structure, homotetramer. It depends on Mg(2+) as a cofactor.

The protein resides in the cytoplasm. It carries out the reaction beta-D-fructose 6-phosphate + ATP = beta-D-fructose 1,6-bisphosphate + ADP + H(+). It participates in carbohydrate degradation; glycolysis; D-glyceraldehyde 3-phosphate and glycerone phosphate from D-glucose: step 3/4. Its activity is regulated as follows. Allosterically activated by ADP and other diphosphonucleosides, and allosterically inhibited by phosphoenolpyruvate. Catalyzes the phosphorylation of D-fructose 6-phosphate to fructose 1,6-bisphosphate by ATP, the first committing step of glycolysis. This Streptococcus uberis (strain ATCC BAA-854 / 0140J) protein is ATP-dependent 6-phosphofructokinase.